We begin with the raw amino-acid sequence, 375 residues long: Platelet-derived growth factor receptor-like protein (375 aa).

The signal sequence occupies residues Met1–Gly21. Residues Gln22–Thr64 form a disordered region. Basic residues predominate over residues Pro40–Pro50. One can recognise an Ig-like C2-type 1 domain in the interval Pro62 to Lys159. A disulfide bond links Cys96 and Cys143. Residues Asn132 and Asn219 are each glycosylated (N-linked (GlcNAc...) asparagine). Residues Pro272 to Ser375 form the Ig-like C2-type 2 domain. Cys293 and Cys357 are joined by a disulfide.

Forms a complex composed of PDGFRL, TNK2 and GRB2. Expressed in colon, lung and liver.

The protein resides in the secreted. This chain is Platelet-derived growth factor receptor-like protein (PDGFRL), found in Homo sapiens (Human).